We begin with the raw amino-acid sequence, 930 residues long: RNA-binding protein 10 (930 aa).

Basic and acidic residues-rich tracts occupy residues 1–14 (MEYE…DRTG) and 21–45 (RSQD…RSYP). The interval 1–127 (MEYERRGGRG…EEDEEEEEKA (127 aa)) is disordered. Glutamate 2 bears the N-acetylserine mark. Phosphoserine occurs at positions 30, 61, and 89. A compositionally biased stretch (acidic residues) spans 59–70 (DSSEEQSAEDSY). A compositionally biased stretch (basic residues) spans 80–89 (RRRRRRHRHS). The span at 98 to 111 (RDGDYRDQDYRTEQ) shows a compositional bias: basic and acidic residues. The span at 112–125 (GEEEEEEEDEEEEE) shows a compositional bias: acidic residues. In terms of domain architecture, RRM 1 spans 129–209 (NIVMLRMLPQ…QKVSMHYSDP (81 aa)). The RanBP2-type zinc finger occupies 212-242 (KINEDWLCNKCGVQNFKRREKCFKCGVPKSE). In terms of domain architecture, RRM 2 spans 300–384 (DTIILRNLNP…KTINVEFAKG (85 aa)). Lysine 383 is modified (N6-acetyllysine). 4 disordered regions span residues 466–524 (PGIT…AANS), 537–569 (SELQ…VPDV), 620–685 (EQSA…DERR), and 700–753 (KGAL…EEKL). Residues 508-524 (YQQSAEASSSQGTAANS) show a composition bias toward polar residues. Over residues 541–557 (SPTHPSSALPPATSPTA) the composition is skewed to low complexity. Composition is skewed to basic and acidic residues over residues 623-639 (ADGH…GKEK), 653-669 (KDME…KENF), and 700-709 (KGALAERQHT). 5 positions are modified to phosphoserine: serine 718, serine 723, serine 733, serine 736, and serine 738. Over residues 743–753 (ERGGPEREEKL) the composition is skewed to basic and acidic residues. The segment at 759–784 (LACLLCRRQFPSKEALIRHQQLSGLH) adopts a C2H2-type; atypical zinc-finger fold. A phosphoserine mark is found at serine 781 and serine 797. The segment covering 815–826 (RDRAAERREKYG) has biased composition (basic and acidic residues). Residues 815–861 (RDRAAERREKYGIPEPPEPKRRKYGGISTASVDFEQPTRDGLGSDNI) form a disordered region. At serine 845 the chain carries Phosphoserine. A G-patch domain is found at 858 to 904 (SDNIGSRMLQAMGWKEGSGLGRKKQGIVTPIEAQTRVRGSGLGARGS). Residue arginine 902 is modified to Omega-N-methylarginine.

In terms of assembly, associates with the spliceosome. Component of a large chromatin remodeling complex, at least composed of MYSM1, PCAF, RBM10 and KIF11/TRIP5.

The protein localises to the nucleus. In terms of biological role, binds to ssRNA containing the consensus sequence 5'-AGGUAA-3'. May be involved in post-transcriptional processing, most probably in mRNA splicing. Binds to RNA homopolymers, with a preference for poly(G) and poly(U) and little for poly(A). May bind to specific miRNA hairpins. The polypeptide is RNA-binding protein 10 (Homo sapiens (Human)).